We begin with the raw amino-acid sequence, 244 residues long: ATP synthase subunit a, chloroplastic (244 aa).

The next 5 helical transmembrane spans lie at 35-55 (QVLI…VIAV), 92-112 (VPFI…GALL), 131-151 (INTT…AGLS), 196-216 (LVVV…VMFL), and 217-237 (GLFI…AYIG).

Belongs to the ATPase A chain family. As to quaternary structure, F-type ATPases have 2 components, CF(1) - the catalytic core - and CF(0) - the membrane proton channel. CF(1) has five subunits: alpha(3), beta(3), gamma(1), delta(1), epsilon(1). CF(0) has four main subunits: a, b, b' and c.

Its subcellular location is the plastid. It localises to the chloroplast thylakoid membrane. In terms of biological role, key component of the proton channel; it plays a direct role in the translocation of protons across the membrane. The sequence is that of ATP synthase subunit a, chloroplastic from Gossypium barbadense (Sea Island cotton).